We begin with the raw amino-acid sequence, 377 residues long: Nitric oxide reductase FlRd-NAD(+) reductase (377 aa).

Belongs to the FAD-dependent oxidoreductase family. FAD serves as cofactor.

The protein resides in the cytoplasm. It catalyses the reaction 2 reduced [nitric oxide reductase rubredoxin domain] + NAD(+) + H(+) = 2 oxidized [nitric oxide reductase rubredoxin domain] + NADH. It participates in nitrogen metabolism; nitric oxide reduction. Its function is as follows. One of at least two accessory proteins for anaerobic nitric oxide (NO) reductase. Reduces the rubredoxin moiety of NO reductase. In Escherichia coli O17:K52:H18 (strain UMN026 / ExPEC), this protein is Nitric oxide reductase FlRd-NAD(+) reductase.